Reading from the N-terminus, the 445-residue chain is UDP-N-acetylmuramoylalanine--D-glutamate ligase (445 aa).

An ATP-binding site is contributed by glycine 111–threonine 117.

This sequence belongs to the MurCDEF family.

The protein localises to the cytoplasm. It carries out the reaction UDP-N-acetyl-alpha-D-muramoyl-L-alanine + D-glutamate + ATP = UDP-N-acetyl-alpha-D-muramoyl-L-alanyl-D-glutamate + ADP + phosphate + H(+). Its pathway is cell wall biogenesis; peptidoglycan biosynthesis. Its function is as follows. Cell wall formation. Catalyzes the addition of glutamate to the nucleotide precursor UDP-N-acetylmuramoyl-L-alanine (UMA). This Rickettsia prowazekii (strain Madrid E) protein is UDP-N-acetylmuramoylalanine--D-glutamate ligase (murD).